The primary structure comprises 159 residues: Transcriptional repressor NrdR (159 aa).

A zinc finger spans residues 3-34 (CPFCRHDDTQVVDSRVSEDGAAIRRRRRCSAC). Positions 49–139 (PAVVKKDGSR…VYRRFEDVSE (91 aa)) constitute an ATP-cone domain.

The protein belongs to the NrdR family. Zn(2+) is required as a cofactor.

Its function is as follows. Negatively regulates transcription of bacterial ribonucleotide reductase nrd genes and operons by binding to NrdR-boxes. The sequence is that of Transcriptional repressor NrdR from Burkholderia cenocepacia (strain HI2424).